Consider the following 339-residue polypeptide: Ferrochelatase (339 aa).

Fe cation contacts are provided by His-209 and Glu-290.

This sequence belongs to the ferrochelatase family.

The protein resides in the cytoplasm. It catalyses the reaction heme b + 2 H(+) = protoporphyrin IX + Fe(2+). It functions in the pathway porphyrin-containing compound metabolism; protoheme biosynthesis; protoheme from protoporphyrin-IX: step 1/1. In terms of biological role, catalyzes the ferrous insertion into protoporphyrin IX. The chain is Ferrochelatase from Rhizobium meliloti (strain 1021) (Ensifer meliloti).